Reading from the N-terminus, the 507-residue chain is GMP synthase [glutamine-hydrolyzing] (507 aa).

Residues 4–193 form the Glutamine amidotransferase type-1 domain; sequence KIIILDFGSQ…VVDVCGCKQD (190 aa). The active-site Nucleophile is Cys79. Catalysis depends on residues His167 and Glu169. One can recognise a GMPS ATP-PPase domain in the interval 194–382; the sequence is WSPASFIEST…LGMPEHLITR (189 aa). 221-227 contributes to the ATP binding site; the sequence is SGGVDSS.

Homodimer.

The enzyme catalyses XMP + L-glutamine + ATP + H2O = GMP + L-glutamate + AMP + diphosphate + 2 H(+). It participates in purine metabolism; GMP biosynthesis; GMP from XMP (L-Gln route): step 1/1. Functionally, catalyzes the synthesis of GMP from XMP. This Bacteroides fragilis (strain ATCC 25285 / DSM 2151 / CCUG 4856 / JCM 11019 / LMG 10263 / NCTC 9343 / Onslow / VPI 2553 / EN-2) protein is GMP synthase [glutamine-hydrolyzing].